A 519-amino-acid polypeptide reads, in one-letter code: Ribonuclease Y (519 aa).

The helical transmembrane segment at 6-26 (VPFYLLIFLVGIGLGVLTFWA) threads the bilayer. The KH domain maps to 209–272 (TVCTVTIPNE…HIAKMALTEL (64 aa)). The HD domain maps to 335–428 (VLDHSLEVSH…CSAADAISAS (94 aa)).

It belongs to the RNase Y family.

The protein localises to the cell membrane. Functionally, endoribonuclease that initiates mRNA decay. This chain is Ribonuclease Y, found in Protochlamydia amoebophila (strain UWE25).